The following is a 295-amino-acid chain: Elongation factor Ts (295 aa).

The segment at Thr-79–Val-82 is involved in Mg(2+) ion dislocation from EF-Tu.

The protein belongs to the EF-Ts family.

It localises to the cytoplasm. Associates with the EF-Tu.GDP complex and induces the exchange of GDP to GTP. It remains bound to the aminoacyl-tRNA.EF-Tu.GTP complex up to the GTP hydrolysis stage on the ribosome. The chain is Elongation factor Ts from Bacillus cereus (strain B4264).